Consider the following 272-residue polypeptide: Tryptophan synthase alpha chain (272 aa).

Active-site proton acceptor residues include Glu60 and Asp71.

The protein belongs to the TrpA family. Tetramer of two alpha and two beta chains.

The catalysed reaction is (1S,2R)-1-C-(indol-3-yl)glycerol 3-phosphate + L-serine = D-glyceraldehyde 3-phosphate + L-tryptophan + H2O. It participates in amino-acid biosynthesis; L-tryptophan biosynthesis; L-tryptophan from chorismate: step 5/5. Functionally, the alpha subunit is responsible for the aldol cleavage of indoleglycerol phosphate to indole and glyceraldehyde 3-phosphate. This Methanosarcina acetivorans (strain ATCC 35395 / DSM 2834 / JCM 12185 / C2A) protein is Tryptophan synthase alpha chain.